Consider the following 124-residue polypeptide: V-type proton ATPase subunit F 1 (124 aa).

Ser-87 carries the phosphoserine modification.

It belongs to the V-ATPase F subunit family. V-ATPase is a heteromultimeric enzyme made up of two complexes: the ATP-hydrolytic V1 complex and the proton translocation V0 complex. The V1 complex consists of three catalytic AB heterodimers that form a heterohexamer, three peripheral stalks each consisting of EG heterodimers, one central rotor including subunits D and F, and the regulatory subunits C and H. The proton translocation complex V0 consists of the proton transport subunit a, a ring of proteolipid subunits c9c'', rotary subunit d, subunits e and f, and the accessory subunits VhaAC45 and ATP6AP2.

Functionally, subunit of the V1 complex of vacuolar(H+)-ATPase (V-ATPase), a multisubunit enzyme composed of a peripheral complex (V1) that hydrolyzes ATP and a membrane integral complex (V0) that translocates protons. V-ATPase is responsible for acidifying and maintaining the pH of intracellular compartments and in some cell types, is targeted to the plasma membrane, where it is responsible for acidifying the extracellular environment. This chain is V-type proton ATPase subunit F 1 (Vha14-1), found in Drosophila melanogaster (Fruit fly).